A 64-amino-acid chain; its full sequence is Large ribosomal subunit protein bL35 (64 aa).

Belongs to the bacterial ribosomal protein bL35 family.

The chain is Large ribosomal subunit protein bL35 from Vibrio campbellii (strain ATCC BAA-1116).